The chain runs to 265 residues: Transcription factor BHLH089 (265 aa).

Residues 1 to 132 are disordered; it reads MDPAPTLAAE…PPPPEPPKQD (132 aa). Composition is skewed to gly residues over residues 17-29 and 44-53; these read LGGG…GGRG and SRGGGGGGGA. The span at 95–105 shows a compositional bias: polar residues; the sequence is SKSSGDNSSLR. Residues 142-155 form a basic motif; degenerate region; the sequence is QATDSHSLAERARR. The region spanning 142-192 is the bHLH domain; it reads QATDSHSLAERARREKISERMKILQDLVPGCNKVIGKASVLDEIINYIQAL. The tract at residues 156–192 is helix-loop-helix motif; that stretch reads EKISERMKILQDLVPGCNKVIGKASVLDEIINYIQAL.

The protein belongs to the bHLH protein family. Interacts with RSS3.

It localises to the nucleus. Transcription factor that may regulate jasmonate-regulated genes. The chain is Transcription factor BHLH089 from Oryza sativa subsp. japonica (Rice).